The following is a 180-amino-acid chain: ATP synthase subunit delta (180 aa).

The protein belongs to the ATPase delta chain family. In terms of assembly, F-type ATPases have 2 components, F(1) - the catalytic core - and F(0) - the membrane proton channel. F(1) has five subunits: alpha(3), beta(3), gamma(1), delta(1), epsilon(1). F(0) has three main subunits: a(1), b(2) and c(10-14). The alpha and beta chains form an alternating ring which encloses part of the gamma chain. F(1) is attached to F(0) by a central stalk formed by the gamma and epsilon chains, while a peripheral stalk is formed by the delta and b chains.

Its subcellular location is the cell membrane. Functionally, f(1)F(0) ATP synthase produces ATP from ADP in the presence of a proton or sodium gradient. F-type ATPases consist of two structural domains, F(1) containing the extramembraneous catalytic core and F(0) containing the membrane proton channel, linked together by a central stalk and a peripheral stalk. During catalysis, ATP synthesis in the catalytic domain of F(1) is coupled via a rotary mechanism of the central stalk subunits to proton translocation. In terms of biological role, this protein is part of the stalk that links CF(0) to CF(1). It either transmits conformational changes from CF(0) to CF(1) or is implicated in proton conduction. The polypeptide is ATP synthase subunit delta (Enterococcus hirae (strain ATCC 9790 / DSM 20160 / JCM 8729 / LMG 6399 / NBRC 3181 / NCIMB 6459 / NCDO 1258 / NCTC 12367 / WDCM 00089 / R)).